The primary structure comprises 533 residues: Peptide chain release factor 3 (533 aa).

A tr-type G domain is found at A9–L284. GTP is bound by residues S18 to T25, D95 to H99, and N149 to D152.

This sequence belongs to the TRAFAC class translation factor GTPase superfamily. Classic translation factor GTPase family. PrfC subfamily.

The protein localises to the cytoplasm. Increases the formation of ribosomal termination complexes and stimulates activities of RF-1 and RF-2. It binds guanine nucleotides and has strong preference for UGA stop codons. It may interact directly with the ribosome. The stimulation of RF-1 and RF-2 is significantly reduced by GTP and GDP, but not by GMP. The polypeptide is Peptide chain release factor 3 (Cupriavidus taiwanensis (strain DSM 17343 / BCRC 17206 / CCUG 44338 / CIP 107171 / LMG 19424 / R1) (Ralstonia taiwanensis (strain LMG 19424))).